Reading from the N-terminus, the 426-residue chain is 3-phosphoshikimate 1-carboxyvinyltransferase (426 aa).

Lysine 22, serine 23, and arginine 27 together coordinate 3-phosphoshikimate. Lysine 22 lines the phosphoenolpyruvate pocket. Positions 96 and 124 each coordinate phosphoenolpyruvate. 3-phosphoshikimate contacts are provided by serine 170, serine 171, glutamine 172, serine 198, aspartate 314, asparagine 337, and lysine 341. Residue glutamine 172 participates in phosphoenolpyruvate binding. Aspartate 314 (proton acceptor) is an active-site residue. Arginine 345, arginine 387, and lysine 412 together coordinate phosphoenolpyruvate.

Belongs to the EPSP synthase family. In terms of assembly, monomer.

It is found in the cytoplasm. It carries out the reaction 3-phosphoshikimate + phosphoenolpyruvate = 5-O-(1-carboxyvinyl)-3-phosphoshikimate + phosphate. The protein operates within metabolic intermediate biosynthesis; chorismate biosynthesis; chorismate from D-erythrose 4-phosphate and phosphoenolpyruvate: step 6/7. Functionally, catalyzes the transfer of the enolpyruvyl moiety of phosphoenolpyruvate (PEP) to the 5-hydroxyl of shikimate-3-phosphate (S3P) to produce enolpyruvyl shikimate-3-phosphate and inorganic phosphate. This Shewanella sp. (strain MR-7) protein is 3-phosphoshikimate 1-carboxyvinyltransferase.